Here is a 274-residue protein sequence, read N- to C-terminus: Bis(5'-nucleosyl)-tetraphosphatase, symmetrical (274 aa).

It belongs to the Ap4A hydrolase family.

It catalyses the reaction P(1),P(4)-bis(5'-adenosyl) tetraphosphate + H2O = 2 ADP + 2 H(+). Its function is as follows. Hydrolyzes diadenosine 5',5'''-P1,P4-tetraphosphate to yield ADP. This chain is Bis(5'-nucleosyl)-tetraphosphatase, symmetrical, found in Shewanella baltica (strain OS155 / ATCC BAA-1091).